A 1308-amino-acid chain; its full sequence is Limbin (1308 aa).

A signal peptide spans 1-26; sequence MDPSGSRGRPTWVLAGGLLAVALALG. Residues 27–300 lie on the Extracellular side of the membrane; sequence GRGCLGASSR…VLPHHGLHAA (274 aa). The tract at residues 36–76 is disordered; that stretch reads RPRWRPLGAQPPRDPQVAPRSGPGLRIPPGRSGAGPESSTQ. N-linked (GlcNAc...) asparagine glycosylation is present at Asn220. Residues 301–321 traverse the membrane as a helical segment; sequence GFFIAFLLSLVLTWAALFLMV. The Cytoplasmic portion of the chain corresponds to 322 to 1308; sequence RYQCLKGNML…KKAMRALGMD (987 aa). Coiled coils occupy residues 455–578, 636–800, and 1001–1113; these read TAEC…ELMD, DQME…DRDQ, and ASEM…EADT. The segment covering 784 to 801 has biased composition (basic and acidic residues); the sequence is MAARAEQLEGEERDRDQE. Positions 784-816 are disordered; that stretch reads MAARAEQLEGEERDRDQEGVQSVRQRLKDDAPE.

Component of the EvC complex composed of EFCAB7, IQCE, EVC2 and EVC; built from two subcomplexes, EVC2:EVC and EFCAB7:IQCE. Interacts with EVC. Interacts (via N-terminal end) with EFCAB7. Interacts (via N-terminal end) with IQCE. As to expression, found in the heart, placenta, lung, liver, skeletal muscle, kidney and pancreas.

It localises to the cell membrane. It is found in the cytoplasm. The protein resides in the cytoskeleton. Its subcellular location is the cilium basal body. The protein localises to the cell projection. It localises to the cilium. It is found in the cilium membrane. The protein resides in the nucleus. Its function is as follows. Component of the EvC complex that positively regulates ciliary Hedgehog (Hh) signaling. Plays a critical role in bone formation and skeletal development. May be involved in early embryonic morphogenesis. The polypeptide is Limbin (EVC2) (Homo sapiens (Human)).